A 353-amino-acid chain; its full sequence is MAAHEPVFAARRHNEDTTRESAFVYTNANNTRDPFEGPNYHIAPRWVYNVSSLWMIFVVIASVFTNGLVIVATAKFKKLRHPLNWILVNLAIADLGETVLASTISVINQIFGYFILGHPMCVFEGWTVSVCGITALWSLTIISWERWVVVCKPFGNVKFDGKWAAGGIIFSWVWAIIWCTPPIFGWSRYWPHGLKTSCGPDVFSGSEDPGVASYMITLMLTCCILPLSIIIICYIFVWSAIHQVAQQQKDSESTQKAEKEVSRMVVVMILAFIVCWGPYASFATFSAVNPGYAWHPLAAAMPAYFAKSATIYNPIIYVFMNRQFRSCIMQLFGKKVEDASEVSGSTTEVSTAS.

Residues 1–47 are Extracellular-facing; the sequence is MAAHEPVFAARRHNEDTTRESAFVYTNANNTRDPFEGPNYHIAPRWV. N-linked (GlcNAc...) asparagine glycosylation is present at N29. A helical membrane pass occupies residues 48–72; it reads YNVSSLWMIFVVIASVFTNGLVIVA. The Cytoplasmic segment spans residues 73-84; it reads TAKFKKLRHPLN. Residues 85–110 form a helical membrane-spanning segment; it reads WILVNLAIADLGETVLASTISVINQI. Residues 111–124 are Extracellular-facing; sequence FGYFILGHPMCVFE. A disulfide bond links C121 and C198. Residues 125 to 144 form a helical membrane-spanning segment; it reads GWTVSVCGITALWSLTIISW. At 145–163 the chain is on the cytoplasmic side; that stretch reads ERWVVVCKPFGNVKFDGKW. Residues 164–187 traverse the membrane as a helical segment; that stretch reads AAGGIIFSWVWAIIWCTPPIFGWS. Residues 188-213 lie on the Extracellular side of the membrane; it reads RYWPHGLKTSCGPDVFSGSEDPGVAS. Residues 214–241 form a helical membrane-spanning segment; sequence YMITLMLTCCILPLSIIIICYIFVWSAI. Residues 242–263 are Cytoplasmic-facing; sequence HQVAQQQKDSESTQKAEKEVSR. The helical transmembrane segment at 264–287 threads the bilayer; the sequence is MVVVMILAFIVCWGPYASFATFSA. Topologically, residues 288 to 295 are extracellular; sequence VNPGYAWH. The chain crosses the membrane as a helical span at residues 296-320; the sequence is PLAAAMPAYFAKSATIYNPIIYVFM. K307 carries the post-translational modification N6-(retinylidene)lysine. The Cytoplasmic portion of the chain corresponds to 321–353; that stretch reads NRQFRSCIMQLFGKKVEDASEVSGSTTEVSTAS.

Belongs to the G-protein coupled receptor 1 family. Opsin subfamily. In terms of tissue distribution, the color pigments are found in the cone photoreceptor cells.

The protein localises to the membrane. Functionally, visual pigments are the light-absorbing molecules that mediate vision. They consist of an apoprotein, opsin, covalently linked to cis-retinal. In Psalidodon fasciatus (Banded astyanax), this protein is Green-sensitive opsin-2 (G101).